A 328-amino-acid polypeptide reads, in one-letter code: Ribosomal RNA large subunit methyltransferase F (328 aa).

The interval 1 to 38 (MTDTPKPPRKKPQRPAKPAAPREKATLHPRNRHQGHYD) is disordered.

This sequence belongs to the methyltransferase superfamily. METTL16/RlmF family.

Its subcellular location is the cytoplasm. It carries out the reaction adenosine(1618) in 23S rRNA + S-adenosyl-L-methionine = N(6)-methyladenosine(1618) in 23S rRNA + S-adenosyl-L-homocysteine + H(+). Its function is as follows. Specifically methylates the adenine in position 1618 of 23S rRNA. In Pseudomonas syringae pv. tomato (strain ATCC BAA-871 / DC3000), this protein is Ribosomal RNA large subunit methyltransferase F.